Here is a 617-residue protein sequence, read N- to C-terminus: DNA double-strand break repair protein Mre11 (617 aa).

Positions 12, 14, 53, and 88 each coordinate Mn(2+). The Proton donor role is filled by His89. Mn(2+)-binding residues include His158, Asp189, and His191. Over residues 395-432 (SPVDPSSSVSSIESSGSVSPIDSVSTVSPSSPSSSAII) the composition is skewed to low complexity. 2 disordered regions span residues 395–437 (SPVD…EPEE) and 513–617 (VEDE…GDYL). A compositionally biased stretch (polar residues) spans 529–547 (APQSSSPVSFSDNSQTGFS). The span at 549–559 (ISPPESIPSPE) shows a compositional bias: low complexity. Residues 560-583 (ILKENSEADADEKPVDGKLSEEKP) are compositionally biased toward basic and acidic residues.

The protein belongs to the MRE11/RAD32 family. As to quaternary structure, homodimer. Forms a heterotetramer composed of two Mre11 subunits and two Rad50 subunits. Mn(2+) is required as a cofactor.

With respect to regulation, nuclease activity is regulated by Rad50. In terms of biological role, part of the Rad50/Mre11 complex, which is involved in the early steps of DNA double-strand break (DSB) repair. The complex may facilitate opening of the processed DNA ends to aid in the recruitment of HerA and NurA. Mre11 binds to DSB ends and has both double-stranded 3'-5' exonuclease activity and single-stranded endonuclease activity. The chain is DNA double-strand break repair protein Mre11 from Methanosarcina mazei (strain ATCC BAA-159 / DSM 3647 / Goe1 / Go1 / JCM 11833 / OCM 88) (Methanosarcina frisia).